The sequence spans 187 residues: Peptide deformylase (187 aa).

The Fe cation site is built by cysteine 107 and histidine 149. The active site involves glutamate 150. Histidine 153 lines the Fe cation pocket.

The protein belongs to the polypeptide deformylase family. It depends on Fe(2+) as a cofactor.

The catalysed reaction is N-terminal N-formyl-L-methionyl-[peptide] + H2O = N-terminal L-methionyl-[peptide] + formate. Functionally, removes the formyl group from the N-terminal Met of newly synthesized proteins. Requires at least a dipeptide for an efficient rate of reaction. N-terminal L-methionine is a prerequisite for activity but the enzyme has broad specificity at other positions. In Microchaete diplosiphon (Fremyella diplosiphon), this protein is Peptide deformylase.